The chain runs to 354 residues: Ferredoxin--NADP reductase (354 aa).

FAD contacts are provided by Asp-42, Gln-50, Tyr-55, Ile-95, Phe-130, Asp-299, and Thr-339.

It belongs to the ferredoxin--NADP reductase type 2 family. Homodimer. FAD is required as a cofactor.

It catalyses the reaction 2 reduced [2Fe-2S]-[ferredoxin] + NADP(+) + H(+) = 2 oxidized [2Fe-2S]-[ferredoxin] + NADPH. The polypeptide is Ferredoxin--NADP reductase (Acidovorax sp. (strain JS42)).